Here is a 449-residue protein sequence, read N- to C-terminus: Flavonol 7-O-beta-glucosyltransferase UGT74F1 (449 aa).

H18 (proton acceptor) is an active-site residue. H18 is an an anthocyanidin binding site. The active-site Charge relay is the D111. Positions 133, 327, 342, 345, 346, 347, 350, 366, and 367 each coordinate UDP-alpha-D-glucose.

The protein belongs to the UDP-glycosyltransferase family.

It carries out the reaction a 7-O-hydroxy-flavonol + UDP-alpha-D-glucose = a flavonol 7-O-beta-D-glucoside + UDP + H(+). Possesses quercetin 7-O-glucosyltransferase and 4'-O-glucosyltransferase activities in vitro. Also active in vitro on benzoates and benzoate derivatives. Has low affinity for the tryptophan precursor anthranilate. Catalyzes the formation of anthranilate glucose ester. Is a minor source of this activity in the plant. The chain is Flavonol 7-O-beta-glucosyltransferase UGT74F1 from Arabidopsis thaliana (Mouse-ear cress).